A 5381-amino-acid polypeptide reads, in one-letter code: Protein purity of essence (5381 aa).

Disordered stretches follow at residues 140-174 (KHPESSNKSIMSMAGSTTGGAGAGGSNDKESPKLE), 339-364 (QQQTAAAASTSQGSGGGLSSVQTSKD), 599-621 (SPETHDDNANTSSQERSGEQKSA), 683-709 (RNDSEQQSPPSTAAAVAAATGAGSSGS), 1162-1212 (SGGD…STET), and 1632-1659 (QAAQPNPSEESSQACDHSEGGEQRQSER). Low complexity predominate over residues 339 to 350 (QQQTAAAASTSQ). 2 stretches are compositionally biased toward low complexity: residues 690 to 709 (SPPSTAAAVAAATGAGSSGS) and 1167 to 1176 (SSCTSAASSS). A compositionally biased stretch (polar residues) spans 1632–1646 (QAAQPNPSEESSQAC). Residues 1647-1658 (DHSEGGEQRQSE) are compositionally biased toward basic and acidic residues. Residues 1815–1884 (KLCTFSQTQK…EDGSCQALSR (70 aa)) form a UBR-type zinc finger. 6 disordered regions span residues 1917-1939 (KRSNTAPGATQQQHGAPARKDSI), 2443-2479 (KNTTNNPQGKSKGGGSAAAGKLLHRKASSQQHQKQLT), 2632-2652 (PDDSEDVPAPSSGPTPVTATQ), 3037-3143 (VSAG…DNNE), 3537-3562 (KQQQQQQQPPPAVVSASSKLRSDREK), and 4247-4280 (HHQQDAPAGTKPKSSKQQQSAGTETPPRKSKEAA). 4 stretches are compositionally biased toward polar residues: residues 1920–1930 (NTAPGATQQQH), 2470–2479 (SSQQHQKQLT), 2643–2652 (SGPTPVTATQ), and 3048–3058 (NVATDGSTLRT). Positions 3065-3075 (GSGGSESGGSG) are enriched in gly residues. Over residues 3084-3104 (ARSSNFGDHPNTTPPRQSCSS) the composition is skewed to polar residues. The segment covering 3119–3132 (SGSGGSASVPGGGL) has biased composition (gly residues). The interval 4904-5374 (PSLKYILRFL…SFIEDLLASL (471 aa)) is UBR4 E3 catalytic module. The HemiRING-type zinc finger occupies 5022-5136 (GLTCFICREG…SSYMQESTQR (115 aa)). Zn(2+)-binding residues include C5025, C5028, H5074, and C5077. The UZI domain maps to 5139-5374 (ISYTSSIHDL…SFIEDLLASL (236 aa)).

The protein belongs to the UBR4 family.

Functionally, has a role in growth of the perineurial glial layer of the larval peripheral nerve. May have a role in male fertility and eye development or function. May bind calmodulin. This is Protein purity of essence from Drosophila pseudoobscura pseudoobscura (Fruit fly).